The following is a 185-amino-acid chain: Translation initiation factor IF-3 (185 aa).

This sequence belongs to the IF-3 family. Monomer.

The protein resides in the cytoplasm. Its function is as follows. IF-3 binds to the 30S ribosomal subunit and shifts the equilibrium between 70S ribosomes and their 50S and 30S subunits in favor of the free subunits, thus enhancing the availability of 30S subunits on which protein synthesis initiation begins. This Streptococcus pneumoniae (strain Hungary19A-6) protein is Translation initiation factor IF-3.